A 436-amino-acid chain; its full sequence is MAAKWEKKDNNQGELTFEIAPDKIKEGLDKAFQRTKKNLAVPGFRKGRVPRQIFNQMYGEEALYQDALNIVLPEAYDAAIKEAGIEPVDQPQVDVESMDKDQPWVLKAVVTVKPDVKLGEYKGLSVTKQNTRVYQKDIDAEIEKQRQQQAELVLKEDEAAAKGDTVVIDFDGYVDGKQFDGGKADNYSLELGSNSFIPGFEDQLVGHKAGEDVDVKVTFPADYQAEDLRDKEATFKVTIHEVKEKQLPELDDEFAKDVDEDVDSLEELEAKTKDRLKEQKVTAAHDAIEDEAISEAVDNAEIAAVPEAMLKDDIDRQMDQYLANMQQQGIEPKMYFQLTGTTEDDLRKQFADGAEKRIKTNLVLEAVVEAEKIEPSEDEVAAEVKDLASQYGMEESAVRSALSDDMLKHDIAIKSAVDLIADSAKQDKKKDAEDDE.

The 86-residue stretch at 163 to 248 folds into the PPIase FKBP-type domain; it reads GDTVVIDFDG…IHEVKEKQLP (86 aa).

This sequence belongs to the FKBP-type PPIase family. Tig subfamily.

The protein resides in the cytoplasm. It catalyses the reaction [protein]-peptidylproline (omega=180) = [protein]-peptidylproline (omega=0). In terms of biological role, involved in protein export. Acts as a chaperone by maintaining the newly synthesized protein in an open conformation. Functions as a peptidyl-prolyl cis-trans isomerase. This Levilactobacillus brevis (strain ATCC 367 / BCRC 12310 / CIP 105137 / JCM 1170 / LMG 11437 / NCIMB 947 / NCTC 947) (Lactobacillus brevis) protein is Trigger factor.